Reading from the N-terminus, the 104-residue chain is Large ribosomal subunit protein bL21 (104 aa).

Belongs to the bacterial ribosomal protein bL21 family. Part of the 50S ribosomal subunit. Contacts protein L20.

Functionally, this protein binds to 23S rRNA in the presence of protein L20. The protein is Large ribosomal subunit protein bL21 of Leptospira borgpetersenii serovar Hardjo-bovis (strain JB197).